We begin with the raw amino-acid sequence, 545 residues long: Glucose-6-phosphate isomerase (545 aa).

The active-site Proton donor is glutamate 345. Residues histidine 376 and lysine 514 contribute to the active site.

Belongs to the GPI family.

It is found in the cytoplasm. The catalysed reaction is alpha-D-glucose 6-phosphate = beta-D-fructose 6-phosphate. Its pathway is carbohydrate biosynthesis; gluconeogenesis. It functions in the pathway carbohydrate degradation; glycolysis; D-glyceraldehyde 3-phosphate and glycerone phosphate from D-glucose: step 2/4. Its function is as follows. Catalyzes the reversible isomerization of glucose-6-phosphate to fructose-6-phosphate. This is Glucose-6-phosphate isomerase from Leptothrix cholodnii (strain ATCC 51168 / LMG 8142 / SP-6) (Leptothrix discophora (strain SP-6)).